The sequence spans 438 residues: Enolase (438 aa).

Residue Gln-174 coordinates (2R)-2-phosphoglycerate. The active-site Proton donor is the Glu-216. Residues Asp-253, Glu-297, and Asp-324 each contribute to the Mg(2+) site. Residues Lys-349, Arg-378, Ser-379, and Lys-400 each contribute to the (2R)-2-phosphoglycerate site. Lys-349 serves as the catalytic Proton acceptor.

Belongs to the enolase family. Component of the RNA degradosome, a multiprotein complex involved in RNA processing and mRNA degradation. It depends on Mg(2+) as a cofactor.

Its subcellular location is the cytoplasm. It localises to the secreted. It is found in the cell surface. It carries out the reaction (2R)-2-phosphoglycerate = phosphoenolpyruvate + H2O. The protein operates within carbohydrate degradation; glycolysis; pyruvate from D-glyceraldehyde 3-phosphate: step 4/5. Functionally, catalyzes the reversible conversion of 2-phosphoglycerate (2-PG) into phosphoenolpyruvate (PEP). It is essential for the degradation of carbohydrates via glycolysis. The protein is Enolase of Psychrobacter cryohalolentis (strain ATCC BAA-1226 / DSM 17306 / VKM B-2378 / K5).